A 1196-amino-acid polypeptide reads, in one-letter code: Phosphatidylinositol-3,5-bisphosphate 3-phosphatase MTMR3 (1196 aa).

Ser8 carries the post-translational modification Phosphoserine. Positions 155 to 576 (EHVTSRFKNE…RNLMLWSAVY (422 aa)) constitute a Myotubularin phosphatase domain. A 1,2-diacyl-sn-glycero-3-phospho-(1D-myo-inositol-3,5-bisphosphate) contacts are provided by Asn326, Asn351, and Ile352. Residues Asn326, Asn351, and Ile352 each coordinate a 1,2-diacyl-sn-glycero-3-phospho-(1D-myo-inositol-3-phosphate). Cys413 (phosphocysteine intermediate) is an active-site residue. Positions 414, 415, 416, 417, 418, 419, 455, and 459 each coordinate a 1,2-diacyl-sn-glycero-3-phospho-(1D-myo-inositol-3,5-bisphosphate). 6 residues coordinate a 1,2-diacyl-sn-glycero-3-phospho-(1D-myo-inositol-3-phosphate): Ser414, Asp415, Gly416, Trp417, Asp418, and Arg419. Arg459 lines the a 1,2-diacyl-sn-glycero-3-phospho-(1D-myo-inositol-3-phosphate) pocket. Positions 587–612 (DDSCAPYPVPGTSPDEPPLSRLPKTR) are disordered. Pro residues predominate over residues 593-603 (YPVPGTSPDEP). 4 positions are modified to phosphoserine: Ser613, Ser633, Ser647, and Ser651. 2 disordered regions span residues 697-719 (TKEE…EVKE) and 855-900 (ESGP…HRTS). Phosphoserine is present on Ser907. Residues 993–1008 (NSHSGRPSTTSSPDQP) show a composition bias toward polar residues. A disordered region spans residues 993–1019 (NSHSGRPSTTSSPDQPSRSHLDDDGMP). Residues 1027–1060 (QRLRQIESGHQQEVETLKKQVQELKSRLESQYLT) adopt a coiled-coil conformation. Position 1062 is a phosphoserine (Ser1062). The FYVE-type zinc-finger motif lies at 1117–1177 (DHLAAHCYAC…VCKSCYSSLH (61 aa)). 8 residues coordinate Zn(2+): Cys1123, Cys1126, Cys1139, Cys1142, Cys1147, Cys1150, Cys1169, and Cys1172.

This sequence belongs to the protein-tyrosine phosphatase family. Non-receptor class myotubularin subfamily. In terms of assembly, forms heterodimers with MTMR4 that recruit both CEP55 and PLK1; occurs during early mitosis, regulates the phosphorylation of CEP55 by PLK1 and its recruitment to the midbody where it mediates cell abscission.

The protein resides in the cytoplasm. The protein localises to the cytosol. Its subcellular location is the membrane. The enzyme catalyses a 1,2-diacyl-sn-glycero-3-phospho-(1D-myo-inositol-3,5-bisphosphate) + H2O = a 1,2-diacyl-sn-glycero-3-phospho-(1D-myo-inositol-5-phosphate) + phosphate. It carries out the reaction a 1,2-diacyl-sn-glycero-3-phospho-(1D-myo-inositol-3-phosphate) + H2O = a 1,2-diacyl-sn-glycero-3-phospho-(1D-myo-inositol) + phosphate. It catalyses the reaction 1,2-dihexadecanoyl-sn-glycero-3-phospho-(1D-myo-inositol-3-phosphate) + H2O = 1,2-dihexadecanoyl-sn-glycero-3-phospho-(1D-myo-inositol) + phosphate. The catalysed reaction is 1,2-dioctanoyl-sn-glycero-3-phospho-(1-D-myo-inositol-3-phosphate) + H2O = 1,2-dioctanoyl-sn-glycero-3-phospho-(1D-myo-inositol) + phosphate. The enzyme catalyses 1,2-dihexadecanoyl-sn-glycero-3-phospho-(1D-myo-inositol-3,5-phosphate) + H2O = 1,2-dihexadecanoyl-sn-glycero-3-phospho-(1D-myo-inositol-5-phosphate) + phosphate. Lipid phosphatase that specifically dephosphorylates the D-3 position of phosphatidylinositol 3-phosphate and phosphatidylinositol 3,5-bisphosphate, generating phosphatidylinositol and phosphatidylinositol 5-phosphate. Decreases the levels of phosphatidylinositol 3-phosphate, a phospholipid found in cell membranes where it acts as key regulator of both cell signaling and intracellular membrane traffic. Could also have a molecular sequestering/adapter activity and regulate biological processes independently of its phosphatase activity. It includes the regulation of midbody abscission during mitotic cytokinesis. In Mus musculus (Mouse), this protein is Phosphatidylinositol-3,5-bisphosphate 3-phosphatase MTMR3.